We begin with the raw amino-acid sequence, 103 residues long: UPF0134 protein MPN_484 (103 aa).

The protein belongs to the UPF0134 family.

This Mycoplasma pneumoniae (strain ATCC 29342 / M129 / Subtype 1) (Mycoplasmoides pneumoniae) protein is UPF0134 protein MPN_484.